The sequence spans 352 residues: Phosphate acyltransferase (352 aa).

This sequence belongs to the PlsX family. Homodimer. Probably interacts with PlsY.

Its subcellular location is the cytoplasm. The enzyme catalyses a fatty acyl-[ACP] + phosphate = an acyl phosphate + holo-[ACP]. It participates in lipid metabolism; phospholipid metabolism. Its function is as follows. Catalyzes the reversible formation of acyl-phosphate (acyl-PO(4)) from acyl-[acyl-carrier-protein] (acyl-ACP). This enzyme utilizes acyl-ACP as fatty acyl donor, but not acyl-CoA. This is Phosphate acyltransferase from Brucella anthropi (strain ATCC 49188 / DSM 6882 / CCUG 24695 / JCM 21032 / LMG 3331 / NBRC 15819 / NCTC 12168 / Alc 37) (Ochrobactrum anthropi).